A 504-amino-acid chain; its full sequence is Maturase K (504 aa).

This sequence belongs to the intron maturase 2 family. MatK subfamily.

Its subcellular location is the plastid. The protein resides in the chloroplast. Usually encoded in the trnK tRNA gene intron. Probably assists in splicing its own and other chloroplast group II introns. In Pachira aquatica (Guiana chestnut), this protein is Maturase K.